Here is a 278-residue protein sequence, read N- to C-terminus: F-box only protein 17 (278 aa).

An F-box domain is found at 15–62 (SLALDALPPELLVQVLSHVPPRSLVTRCRPVCRAWRDIVDGPTVWLLQ). The FBA domain occupies 99–275 (YCLRAPFGRN…VTHSSVRVRI (177 aa)).

As to quaternary structure, part of a SCF (SKP1-cullin-F-box) protein ligase complex. Interacts with SKP1 and CUL1. In terms of tissue distribution, expressed in heart, skeletal muscle, liver and kidney. Expressed at lower levels in spleen and brain.

Functionally, substrate-recognition component of the SCF (SKP1-CUL1-F-box protein)-type E3 ubiquitin ligase complex. Able to recognize and bind denatured glycoproteins, which are modified with complex-type oligosaccharides. Also recognizes sulfated glycans. Does not bind high-mannose glycoproteins. This is F-box only protein 17 (FBXO17) from Homo sapiens (Human).